The chain runs to 790 residues: Cadherin-20 (790 aa).

The N-terminal stretch at 1–25 (MSCKRSYHRHCALVYYMVLLDLTNA) is a signal peptide. The propeptide occupies 26–52 (VFEFSHPLIRDSGNSQSRQLLHHRLKR). The Extracellular portion of the chain corresponds to 26-612 (VFEFSHPLIR…PYTLPISLSR (587 aa)). Cadherin domains follow at residues 54-158 (WVWN…EPKF), 159-267 (LDGP…PPRF), 268-382 (PQKH…PPVF), 383-487 (GSSF…APTF), and 487-605 (FTKF…EPYT). 5 N-linked (GlcNAc...) asparagine glycosylation sites follow: Asn-254, Asn-283, Asn-413, Asn-454, and Asn-535. The chain crosses the membrane as a helical span at residues 613–633 (GALIAILTCIFVLLVLVLLIL). Residues 634–790 (SMRRHRKQPY…YGTKDNNGSL (157 aa)) lie on the Cytoplasmic side of the membrane.

Detected in embryonic posterior neural plate, embryonic neural tube, sulcus limitans and embryonic kidney.

It localises to the cell membrane. Cadherins are calcium-dependent cell adhesion proteins. They preferentially interact with themselves in a homophilic manner in connecting cells; cadherins may thus contribute to the sorting of heterogeneous cell types. The sequence is that of Cadherin-20 (cdh20) from Xenopus laevis (African clawed frog).